Reading from the N-terminus, the 442-residue chain is Trigger factor (442 aa).

In terms of domain architecture, PPIase FKBP-type spans 163-248 (GDQVVIDFLG…IKEVKAPKAA (86 aa)).

Belongs to the FKBP-type PPIase family. Tig subfamily.

It is found in the cytoplasm. It catalyses the reaction [protein]-peptidylproline (omega=180) = [protein]-peptidylproline (omega=0). Involved in protein export. Acts as a chaperone by maintaining the newly synthesized protein in an open conformation. Functions as a peptidyl-prolyl cis-trans isomerase. The protein is Trigger factor of Dinoroseobacter shibae (strain DSM 16493 / NCIMB 14021 / DFL 12).